A 68-amino-acid polypeptide reads, in one-letter code: Large ribosomal subunit protein uL29 (68 aa).

The protein belongs to the universal ribosomal protein uL29 family.

This is Large ribosomal subunit protein uL29 from Rhodopseudomonas palustris (strain BisB18).